The sequence spans 483 residues: Probable L-xylulose kinase (483 aa).

The protein belongs to the FGGY kinase family. As to quaternary structure, homodimer.

It carries out the reaction L-xylulose + ATP = L-xylulose 5-phosphate + ADP + H(+). This Pasteurella multocida (strain Pm70) protein is Probable L-xylulose kinase (lyx).